Reading from the N-terminus, the 269-residue chain is Putative carbamate hydrolase RutD (269 aa).

The AB hydrolase-1 domain maps to Val26–Asn144.

The protein belongs to the AB hydrolase superfamily. Hydrolase RutD family.

It catalyses the reaction carbamate + 2 H(+) = NH4(+) + CO2. Functionally, involved in pyrimidine catabolism. May facilitate the hydrolysis of carbamate, a reaction that can also occur spontaneously. The protein is Putative carbamate hydrolase RutD of Caulobacter vibrioides (strain ATCC 19089 / CIP 103742 / CB 15) (Caulobacter crescentus).